The primary structure comprises 513 residues: MQLNSTEIAELIKKRIEQFNVSSEARNEGTIVAVTDGIIRIHGLADVMQGEMIELPGSRYAIALNLERDSVGAVVMGPYADLKEGDKVQSTGRILEVPVGNALLGRVVNTLGEPIDGKGAIDAAGFEPVEKIAPGVIERQSVDQPVQTGYKSVDAMIPVGRGQRELIIGDRQCGKTAMAVDAIINQKGTGIKCVYVAVGQKASTIANVVRKLEEHGALDHTIVVAASASESAALQYLAPYSGCTMGEYFRDRGEDALIVYDDLSKQAVAYRQISLLLKRPPGREAYPGDVFYLHSRLLERAARVNEQYVENYTNGEVKGKTGSLTALPIIETQAGDVSAFVPTNVISITDGQIFLETDLFNAGIRPAVNAGISVSRVGGAAQTKIIKKLGGGIRLALAQYRELAAFSQFASDLDDATREQLEHGERVTELMKQKQYAPLSIANMGVSLFAVEKGFLKGIELNKILDFEAALHSYMNSEHADLMKTINESGNYNDEIASKLNDALTNFKATQTW.

Gly-169–Thr-176 lines the ATP pocket.

Belongs to the ATPase alpha/beta chains family. As to quaternary structure, F-type ATPases have 2 components, CF(1) - the catalytic core - and CF(0) - the membrane proton channel. CF(1) has five subunits: alpha(3), beta(3), gamma(1), delta(1), epsilon(1). CF(0) has three main subunits: a(1), b(2) and c(9-12). The alpha and beta chains form an alternating ring which encloses part of the gamma chain. CF(1) is attached to CF(0) by a central stalk formed by the gamma and epsilon chains, while a peripheral stalk is formed by the delta and b chains.

It localises to the cell inner membrane. The enzyme catalyses ATP + H2O + 4 H(+)(in) = ADP + phosphate + 5 H(+)(out). In terms of biological role, produces ATP from ADP in the presence of a proton gradient across the membrane. The alpha chain is a regulatory subunit. The chain is ATP synthase subunit alpha from Alteromonas mediterranea (strain DSM 17117 / CIP 110805 / LMG 28347 / Deep ecotype).